The primary structure comprises 320 residues: Phosphatidylserine decarboxylase proenzyme (320 aa).

Residues D90, H147, and S254 each act as charge relay system; for autoendoproteolytic cleavage activity in the active site. Catalysis depends on S254, which acts as the Schiff-base intermediate with substrate; via pyruvic acid; for decarboxylase activity. Position 254 is a pyruvic acid (Ser); by autocatalysis (S254). The segment at 288–320 (EASTAAEPAPLPEEEIRAEHRASPLVDDTQDQG) is disordered.

This sequence belongs to the phosphatidylserine decarboxylase family. PSD-B subfamily. Prokaryotic type I sub-subfamily. Heterodimer of a large membrane-associated beta subunit and a small pyruvoyl-containing alpha subunit. Pyruvate is required as a cofactor. Post-translationally, is synthesized initially as an inactive proenzyme. Formation of the active enzyme involves a self-maturation process in which the active site pyruvoyl group is generated from an internal serine residue via an autocatalytic post-translational modification. Two non-identical subunits are generated from the proenzyme in this reaction, and the pyruvate is formed at the N-terminus of the alpha chain, which is derived from the carboxyl end of the proenzyme. The autoendoproteolytic cleavage occurs by a canonical serine protease mechanism, in which the side chain hydroxyl group of the serine supplies its oxygen atom to form the C-terminus of the beta chain, while the remainder of the serine residue undergoes an oxidative deamination to produce ammonia and the pyruvoyl prosthetic group on the alpha chain. During this reaction, the Ser that is part of the protease active site of the proenzyme becomes the pyruvoyl prosthetic group, which constitutes an essential element of the active site of the mature decarboxylase.

It is found in the cell membrane. It catalyses the reaction a 1,2-diacyl-sn-glycero-3-phospho-L-serine + H(+) = a 1,2-diacyl-sn-glycero-3-phosphoethanolamine + CO2. It functions in the pathway phospholipid metabolism; phosphatidylethanolamine biosynthesis; phosphatidylethanolamine from CDP-diacylglycerol: step 2/2. Functionally, catalyzes the formation of phosphatidylethanolamine (PtdEtn) from phosphatidylserine (PtdSer). The sequence is that of Phosphatidylserine decarboxylase proenzyme from Klebsiella pneumoniae (strain 342).